Reading from the N-terminus, the 1436-residue chain is MAP kinase kinase kinase win1 (1436 aa).

Positions 56–85 (LELPNNGKEENHRRPSVARSSSDRSKASAK) are disordered. The span at 76 to 85 (SSDRSKASAK) shows a compositional bias: basic and acidic residues. A Phosphoserine modification is found at serine 224. Residue threonine 226 is modified to Phosphothreonine. The segment at 282 to 1123 (EDSDLDSETS…SNITIRWQQG (842 aa)) is interaction with tea4. In terms of domain architecture, Protein kinase spans 1120–1406 (WQQGGLIGSG…AAELLMDPWV (287 aa)). ATP is bound by residues 1126–1134 (IGSGSFGTV) and lysine 1149. The active-site Proton acceptor is aspartate 1244.

It belongs to the protein kinase superfamily. STE Ser/Thr protein kinase family. MAP kinase kinase kinase subfamily. As to quaternary structure, interacts with tea4.

The enzyme catalyses L-seryl-[protein] + ATP = O-phospho-L-seryl-[protein] + ADP + H(+). It carries out the reaction L-threonyl-[protein] + ATP = O-phospho-L-threonyl-[protein] + ADP + H(+). Its function is as follows. Involved in a signal transduction pathway that is activated by changes in the osmolarity of the extracellular environment. Activates the wis1 MAP kinase kinase by phosphorylation. The polypeptide is MAP kinase kinase kinase win1 (win1) (Schizosaccharomyces pombe (strain 972 / ATCC 24843) (Fission yeast)).